A 369-amino-acid chain; its full sequence is tRNA-specific 2-thiouridylase MnmA (369 aa).

Residues 7 to 14 (GISGGVDS) and M33 contribute to the ATP site. Residues 93–95 (NPD) are interaction with target base in tRNA. C98 serves as the catalytic Nucleophile. C98 and C195 form a disulfide bridge. Residue G123 participates in ATP binding. Residues 145-147 (KDQ) form an interaction with tRNA region. Residue C195 is the Cysteine persulfide intermediate of the active site. The interaction with tRNA stretch occupies residues 307–308 (RY).

This sequence belongs to the MnmA/TRMU family. In terms of assembly, interacts with TusE.

The protein localises to the cytoplasm. It carries out the reaction S-sulfanyl-L-cysteinyl-[protein] + uridine(34) in tRNA + AH2 + ATP = 2-thiouridine(34) in tRNA + L-cysteinyl-[protein] + A + AMP + diphosphate + H(+). Functionally, catalyzes the 2-thiolation of uridine at the wobble position (U34) of tRNA(Lys), tRNA(Glu) and tRNA(Gln), leading to the formation of s(2)U34, the first step of tRNA-mnm(5)s(2)U34 synthesis. Sulfur is provided by IscS, via a sulfur-relay system. Binds ATP and its substrate tRNAs. The sequence is that of tRNA-specific 2-thiouridylase MnmA from Blochmanniella floridana.